Reading from the N-terminus, the 723-residue chain is Transient receptor potential cation channel subfamily V member 5 (723 aa).

Topologically, residues 1 to 320 are cytoplasmic; the sequence is MGVKKPWIQL…SLKWKKYGQP (320 aa). 5 ANK repeats span residues 72 to 101, 110 to 139, 156 to 185, 189 to 222, and 232 to 261; these read LGETALHVAALYDNLDAAIMLMETAPYLVT, VGQTALHIAIMNQNVNLVRALLARGASASA, YGEHPLSFAACVGSEEIVRLLIEHGADIRA, LGNTVLHILVLQPNKTFACQMYNLLLSHDGGDHL, and QGLTPFKLAGVEGNTVMFQHLMQKRKHIQW. Residues 321–341 traverse the membrane as a helical segment; the sequence is YFCLLGMLYIFYMICFTTCCV. Residues 342-378 are Extracellular-facing; the sequence is YRPLKFRDANRTHVRDNTVLEQKPLQEAYVTYQDKVR. Asn351 carries N-linked (GlcNAc...) asparagine glycosylation. The helical transmembrane segment at 379 to 401 threads the bilayer; sequence LVGELVTVIGAVVILLIEIPDIF. Over 402–412 the chain is Cytoplasmic; sequence RVGASRYFGHT. A helical transmembrane segment spans residues 413–435; that stretch reads VLGGPFHVIIITYASLVLLIMVM. The Extracellular portion of the chain corresponds to 436–441; that stretch reads RLTSMN. Residues 442–462 form a helical membrane-spanning segment; the sequence is GEVVPISMALVLGWCSVMYFS. Over 463–485 the chain is Cytoplasmic; that stretch reads RGFQMLGPFTIMIQKMIFGDLLR. A helical transmembrane segment spans residues 486–506; that stretch reads FCWLMAMVILGFASAFYIIFQ. Residues 517 to 537 constitute an intramembrane region (pore-forming); the sequence is SDYPTAMFSTFELFLTIIDGP. Asp535 is a Ca(2+) binding site. A helical membrane pass occupies residues 550–570; sequence LTYFAFAIIATLLMLNLFIAM. The Cytoplasmic portion of the chain corresponds to 571–723; it reads MGDTHWRVAQ…EGDGEEIYHF (153 aa). The segment at 591 to 595 is interaction with S100A10; that stretch reads VATTV. An involved in Ca(2+)-dependent inactivation region spans residues 643 to 646; the sequence is AFKS. Positions 651–674 are disordered; that stretch reads EVQEQLSEKQPSGTETGTLARGSV. Positions 654–667 are enriched in polar residues; it reads EQLSEKQPSGTETG. Thr678 is modified (phosphothreonine). Position 682 is a phosphoserine (Ser682). Residues 693-723 form an involved in Ca(2+)-dependent inactivation region; the sequence is RGWEILRRNTLGHLNLGQDLGEGDGEEIYHF.

The protein belongs to the transient receptor (TC 1.A.4) family. TrpV subfamily. TRPV5 sub-subfamily. As to quaternary structure, homotetramer and probably heterotetramer with TRPV6. Interacts with TRPV6. Interacts with S100A10 and probably with the ANAX2-S100A10 heterotetramer. The interaction with S100A10 is required for the trafficking to the plasma membrane. Interacts with calmodulin. Interacts with BSPRY, which results in its inactivation. Post-translationally, glycosylated. In terms of tissue distribution, detected in kidney (at protein level). Detected in kidney.

Its subcellular location is the cell membrane. The protein resides in the apical cell membrane. It carries out the reaction Ca(2+)(in) = Ca(2+)(out). Its activity is regulated as follows. Activated by WNK3. In terms of biological role, constitutively active calcium selective cation channel thought to be involved in Ca(2+) reabsorption in kidney and intestine. Required for normal Ca(2+) reabsorption in the kidney distal convoluted tubules. The channel is activated by low internal calcium level and the current exhibits an inward rectification. A Ca(2+)-dependent feedback regulation includes fast channel inactivation and slow current decay. Heteromeric assembly with TRPV6 seems to modify channel properties. TRPV5-TRPV6 heteromultimeric concatemers exhibit voltage-dependent gating. This chain is Transient receptor potential cation channel subfamily V member 5 (Trpv5), found in Rattus norvegicus (Rat).